Consider the following 238-residue polypeptide: Uridylate kinase (238 aa).

ATP is bound at residue 12 to 15; that stretch reads KLSG. Position 54 (Gly-54) interacts with UMP. Residues Gly-55 and Arg-59 each coordinate ATP. UMP-binding positions include Asp-74 and 135–142; that span reads TGNPFFTT. Residues Thr-162, Tyr-168, and Asp-171 each contribute to the ATP site.

This sequence belongs to the UMP kinase family. In terms of assembly, homohexamer.

The protein resides in the cytoplasm. It catalyses the reaction UMP + ATP = UDP + ADP. It functions in the pathway pyrimidine metabolism; CTP biosynthesis via de novo pathway; UDP from UMP (UMPK route): step 1/1. Its activity is regulated as follows. Inhibited by UTP. Functionally, catalyzes the reversible phosphorylation of UMP to UDP. This is Uridylate kinase from Bordetella pertussis (strain Tohama I / ATCC BAA-589 / NCTC 13251).